Consider the following 193-residue polypeptide: Thymidine kinase (193 aa).

Residues 9-16 and 87-90 each bind ATP; these read STMNAGKS and DEAQ. The Proton acceptor role is filled by Glu-88. 4 residues coordinate Zn(2+): Cys-145, Cys-147, Cys-182, and His-185.

It belongs to the thymidine kinase family. As to quaternary structure, homotetramer.

Its subcellular location is the cytoplasm. The catalysed reaction is thymidine + ATP = dTMP + ADP + H(+). This Haemophilus influenzae (strain ATCC 51907 / DSM 11121 / KW20 / Rd) protein is Thymidine kinase.